We begin with the raw amino-acid sequence, 654 residues long: MIKSQKEYLERIEYLNTLSHHYYNLDEPIVSDAVYDELYQELKAYEEKNPSQIQANSPTQKVGATALNQFNKNPHLTRMWSLDDVFNHNELQAWLQRILKAYPSASFVCSPKLDGVSLNLLYQKGKLMKATTRGNGLEGELVTTNAKHVANISHTIPYNEEIEIRGEVIISKEDFNALNEERLNANEPLFANPRNAASGSLRQLDSKITKKRKLQFIPWGVGKHSLNFLSFKECLDFIVSLGFSAIKHLSLNKNHQEIEANYHTLIQERERFFALLDGMVIVVNELNIQKELGYTQKSPKFACAYKFPALEKHTKIVGVINQVGRSGAITPVALLEPVEIAGAIITKATLHNYSEIEKKNIMLNDRVVVIRSGDVIPKIIKPLESYRDGSQCKIIRPKVCPICSHELLCEEIFTYCQNLNCSARLKESLIHFASKDALNIQGLGDKVIEQLFEEKLIFNALDLYALKLEDLMRLDKFKIKKAQNLLDAIQKSKNPPLWRLINALGIEHIGKGASKTLAKYGLYVLEKSEDEFLEMEGFGVEMARSLVNFYASNQEFIQSLFDLLNPKNSDIIEEKQESSSIFSHKTIVLTGTLSKPRQEYAQILENLGAKISSSVSAKTDFLIVGENAGSKLSLAQKHGVNILNEEELLKYLKE.

Residues 32–36 (DAVYD) and 81–82 (SL) contribute to the NAD(+) site. Lys112 (N6-AMP-lysine intermediate) is an active-site residue. Residues Arg133, Glu167, and Lys306 each coordinate NAD(+). 4 residues coordinate Zn(2+): Cys400, Cys403, Cys416, and Cys421. A BRCT domain is found at 577–654 (ESSSIFSHKT…EEELLKYLKE (78 aa)).

It belongs to the NAD-dependent DNA ligase family. LigA subfamily. Mg(2+) is required as a cofactor. It depends on Mn(2+) as a cofactor.

It catalyses the reaction NAD(+) + (deoxyribonucleotide)n-3'-hydroxyl + 5'-phospho-(deoxyribonucleotide)m = (deoxyribonucleotide)n+m + AMP + beta-nicotinamide D-nucleotide.. Its function is as follows. DNA ligase that catalyzes the formation of phosphodiester linkages between 5'-phosphoryl and 3'-hydroxyl groups in double-stranded DNA using NAD as a coenzyme and as the energy source for the reaction. It is essential for DNA replication and repair of damaged DNA. This is DNA ligase from Helicobacter acinonychis (strain Sheeba).